Consider the following 213-residue polypeptide: Golgi to ER traffic protein 1 (213 aa).

Residues 1–4 (MESW) lie on the Lumenal side of the membrane. Residues 5-25 (LLVILAFLVLERLWPLIDSLI) traverse the membrane as a helical segment. At 26–98 (QRFAQANSTK…RTKASLKKVK (73 aa)) the chain is on the cytoplasmic side. Residues 55 to 99 (AQDQYVKWTKNNRTLEKINKQIEEEKKQLLSQVDRTKASLKKVKL) are a coiled coil. A helical transmembrane segment spans residues 99-119 (LVLITVPFTILKFYKGKMPIY). Residues 120–158 (DLPKGLFPNYLQGLFQHGWVYLALGPLNIKKVGDGTHVT) are Lumenal-facing. The helical transmembrane segment at 159–175 (VSLAIWLFALLKVVSTL) threads the bilayer. The Cytoplasmic portion of the chain corresponds to 176–213 (GNIWESLTAPAIPAPTITTDPIDQTNESEKPPVDQPVD). The segment at 193–213 (TTDPIDQTNESEKPPVDQPVD) is disordered.

This sequence belongs to the WRB/GET1 family. Component of the Golgi to ER traffic (GET) complex, which is composed of GET1, GET2 and GET3. Within the complex, GET1 and GET2 form a heterotetramer which is stabilized by phosphatidylinositol binding and which binds to the GET3 homodimer.

It localises to the endoplasmic reticulum membrane. The protein resides in the golgi apparatus membrane. Required for the post-translational delivery of tail-anchored (TA) proteins to the endoplasmic reticulum. Together with GET2, acts as a membrane receptor for soluble GET3, which recognizes and selectively binds the transmembrane domain of TA proteins in the cytosol. The GET complex cooperates with the HDEL receptor ERD2 to mediate the ATP-dependent retrieval of resident ER proteins that contain a C-terminal H-D-E-L retention signal from the Golgi to the ER. The polypeptide is Golgi to ER traffic protein 1 (Kluyveromyces lactis (strain ATCC 8585 / CBS 2359 / DSM 70799 / NBRC 1267 / NRRL Y-1140 / WM37) (Yeast)).